The chain runs to 175 residues: Translation initiation factor IF-3 (175 aa).

Belongs to the IF-3 family. As to quaternary structure, monomer.

The protein localises to the cytoplasm. In terms of biological role, IF-3 binds to the 30S ribosomal subunit and shifts the equilibrium between 70S ribosomes and their 50S and 30S subunits in favor of the free subunits, thus enhancing the availability of 30S subunits on which protein synthesis initiation begins. The sequence is that of Translation initiation factor IF-3 from Chlamydia trachomatis serovar D (strain ATCC VR-885 / DSM 19411 / UW-3/Cx).